Consider the following 166-residue polypeptide: Thiol peroxidase (166 aa).

One can recognise a Thioredoxin domain in the interval 18–166 (LKVGDKAPDV…NYEALLKVLK (149 aa)). C60 acts as the Cysteine sulfenic acid (-SOH) intermediate in catalysis. C60 and C94 are disulfide-bonded.

It belongs to the peroxiredoxin family. Tpx subfamily. As to quaternary structure, homodimer.

The enzyme catalyses a hydroperoxide + [thioredoxin]-dithiol = an alcohol + [thioredoxin]-disulfide + H2O. In terms of biological role, thiol-specific peroxidase that catalyzes the reduction of hydrogen peroxide and organic hydroperoxides to water and alcohols, respectively. Plays a role in cell protection against oxidative stress by detoxifying peroxides. This chain is Thiol peroxidase, found in Helicobacter pylori (strain J99 / ATCC 700824) (Campylobacter pylori J99).